Here is a 259-residue protein sequence, read N- to C-terminus: Ribonuclease HII (259 aa).

The RNase H type-2 domain occupies 72 to 259 (ERIAGIDEAG…PVREALGVQS (188 aa)). Asp78, Glu79, and Asp170 together coordinate a divalent metal cation.

It belongs to the RNase HII family. Requires Mn(2+) as cofactor. It depends on Mg(2+) as a cofactor.

The protein resides in the cytoplasm. It catalyses the reaction Endonucleolytic cleavage to 5'-phosphomonoester.. Endonuclease that specifically degrades the RNA of RNA-DNA hybrids. This chain is Ribonuclease HII, found in Geobacillus thermodenitrificans (strain NG80-2).